A 318-amino-acid polypeptide reads, in one-letter code: Nitrate reductase [NADH] (318 aa).

Residues 216 to 291 (AKSFTMAEVE…LLEYYIGELA (76 aa)) form the Cytochrome b5 heme-binding domain. 2 residues coordinate heme: His-251 and His-274.

It belongs to the nitrate reductase family. Homodimer. FAD is required as a cofactor. Requires heme as cofactor. Mo-molybdopterin serves as cofactor.

It carries out the reaction nitrite + NAD(+) + H2O = nitrate + NADH + H(+). Functionally, nitrate reductase is a key enzyme involved in the first step of nitrate assimilation in plants, fungi and bacteria. The protein is Nitrate reductase [NADH] of Chlorella vulgaris (Green alga).